A 486-amino-acid polypeptide reads, in one-letter code: Cobyric acid synthase (486 aa).

The GATase cobBQ-type domain maps to 250 to 438 (AFRIVVPVPP…LHGMFDTPSA (189 aa)). Residue Cys-331 is the Nucleophile of the active site. His-430 is an active-site residue.

This sequence belongs to the CobB/CobQ family. CobQ subfamily.

It functions in the pathway cofactor biosynthesis; adenosylcobalamin biosynthesis. Functionally, catalyzes amidations at positions B, D, E, and G on adenosylcobyrinic A,C-diamide. NH(2) groups are provided by glutamine, and one molecule of ATP is hydrogenolyzed for each amidation. This Herminiimonas arsenicoxydans protein is Cobyric acid synthase.